The following is a 396-amino-acid chain: Elongation factor Tu (396 aa).

The 197-residue stretch at 10–206 (KPHCNIGTIG…AVDAYIPQPE (197 aa)) folds into the tr-type G domain. The tract at residues 19–26 (GHVDHGKT) is G1. 19 to 26 (GHVDHGKT) contacts GTP. T26 contributes to the Mg(2+) binding site. Residues 60 to 64 (GITIS) form a G2 region. Residues 81-84 (DCPG) are G3. Residues 81–85 (DCPGH) and 136–139 (NKVD) each bind GTP. The tract at residues 136–139 (NKVD) is G4. Residues 174–176 (SAL) form a G5 region.

It belongs to the TRAFAC class translation factor GTPase superfamily. Classic translation factor GTPase family. EF-Tu/EF-1A subfamily. As to quaternary structure, monomer.

The protein resides in the cytoplasm. It carries out the reaction GTP + H2O = GDP + phosphate + H(+). Functionally, GTP hydrolase that promotes the GTP-dependent binding of aminoacyl-tRNA to the A-site of ribosomes during protein biosynthesis. The chain is Elongation factor Tu from Granulibacter bethesdensis (strain ATCC BAA-1260 / CGDNIH1).